The primary structure comprises 149 residues: Transcriptional repressor NrdR (149 aa).

The segment at 3-34 is a zinc-finger region; the sequence is CPFCSIQETKVIDSRLVADGHQVRRRRECTMC. In terms of domain architecture, ATP-cone spans 49–139; sequence PRVVKRDGSR…VYRSFEDIRE (91 aa).

This sequence belongs to the NrdR family. The cofactor is Zn(2+).

In terms of biological role, negatively regulates transcription of bacterial ribonucleotide reductase nrd genes and operons by binding to NrdR-boxes. In Pseudoalteromonas atlantica (strain T6c / ATCC BAA-1087), this protein is Transcriptional repressor NrdR.